We begin with the raw amino-acid sequence, 159 residues long: Cytochrome c-type biogenesis protein CcmE (159 aa).

At 1-8 (MNIRRKNR) the chain is on the cytoplasmic side. Residues 9 to 29 (LWIACAVLAGLALTITLVLYA) traverse the membrane as a helical; Signal-anchor for type II membrane protein segment. Topologically, residues 30 to 159 (LRSNIDLFYT…PESVYKDKAS (130 aa)) are periplasmic. Heme-binding residues include His130 and Tyr134. The interval 130–159 (HDENYTPPEVEKAMQENHRRPESVYKDKAS) is disordered.

It belongs to the CcmE/CycJ family.

The protein resides in the cell inner membrane. Heme chaperone required for the biogenesis of c-type cytochromes. Transiently binds heme delivered by CcmC and transfers the heme to apo-cytochromes in a process facilitated by CcmF and CcmH. In Citrobacter koseri (strain ATCC BAA-895 / CDC 4225-83 / SGSC4696), this protein is Cytochrome c-type biogenesis protein CcmE.